The chain runs to 453 residues: Cysteine desulfurase, mitochondrial (453 aa).

Residues methionine 1–threonine 34 constitute a mitochondrion transit peptide. Pyridoxal 5'-phosphate contacts are provided by residues alanine 123–threonine 124, asparagine 203, glutamine 231, and serine 251–histidine 253. An N6-(pyridoxal phosphate)lysine modification is found at lysine 254. Threonine 291 serves as a coordination point for pyridoxal 5'-phosphate. The Cysteine persulfide intermediate role is filled by cysteine 377. Cysteine 377 contributes to the [2Fe-2S] cluster binding site.

It belongs to the class-V pyridoxal-phosphate-dependent aminotransferase family. NifS/IscS subfamily. Interacts with FH. Interacts with SUFE1. Requires pyridoxal 5'-phosphate as cofactor.

It is found in the mitochondrion. It catalyses the reaction (sulfur carrier)-H + L-cysteine = (sulfur carrier)-SH + L-alanine. With respect to regulation, threefold increase in the catalytic activity in the presence of FH (frataxin). 30-fold increase in the catalytic activity in the presence of SUFE1. Catalyzes the removal of elemental sulfur from cysteine to produce alanine. Supplies the inorganic sulfur for iron-sulfur (Fe-S) clusters. This Arabidopsis thaliana (Mouse-ear cress) protein is Cysteine desulfurase, mitochondrial.